Reading from the N-terminus, the 95-residue chain is CRISPR-associated endoribonuclease Cas2 (95 aa).

Asp10 contacts Mg(2+).

The protein belongs to the CRISPR-associated endoribonuclease Cas2 protein family. As to quaternary structure, homodimer, forms a heterotetramer with a Cas1 homodimer. Mg(2+) serves as cofactor.

CRISPR (clustered regularly interspaced short palindromic repeat), is an adaptive immune system that provides protection against mobile genetic elements (viruses, transposable elements and conjugative plasmids). CRISPR clusters contain sequences complementary to antecedent mobile elements and target invading nucleic acids. CRISPR clusters are transcribed and processed into CRISPR RNA (crRNA). Functions as a ssRNA-specific endoribonuclease. Involved in the integration of spacer DNA into the CRISPR cassette. This is CRISPR-associated endoribonuclease Cas2 from Geobacter sulfurreducens (strain ATCC 51573 / DSM 12127 / PCA).